Consider the following 167-residue polypeptide: MLKKIISAIALIAGTSGVVNAGNWQYKSLDVNVNIEQNFIPDIDSAVRIIPVNYDSDPKLDSQLYTVEMTIPAGVSAVKIAPTDSLTSSGQQIGKLVNVNNPDQNMNYYIRKDSGAGNFMAGQKGSFPVKENTSYTFSAIYTGGEYPNSGYSSGTYAGNLTVSFYSN.

A signal peptide spans 1–21 (MLKKIISAIALIAGTSGVVNA).

The protein resides in the fimbrium. This chain is CS6 fimbrial subunit B (cssB), found in Escherichia coli.